A 146-amino-acid chain; its full sequence is MAFWQSKTLAQMSATEWESLCDGCGKCCLNKLIDDETEDLYYTNAACLLLDHQTAGCQHYSDRFTHVPQCTVITIDNIHELTWLPDSCAYRRLAAGRELPSWHPLLTGSKEAMHLAGMSIQGKVVDERRVKDIEDHIVLWPLKDVD.

It belongs to the UPF0260 family.

In Shewanella baltica (strain OS155 / ATCC BAA-1091), this protein is UPF0260 protein Sbal_1871.